The sequence spans 181 residues: ATP-dependent protease subunit HslV (181 aa).

The active site involves T7. Positions 162, 165, and 168 each coordinate Na(+).

Belongs to the peptidase T1B family. HslV subfamily. In terms of assembly, a double ring-shaped homohexamer of HslV is capped on each side by a ring-shaped HslU homohexamer. The assembly of the HslU/HslV complex is dependent on binding of ATP.

It localises to the cytoplasm. It carries out the reaction ATP-dependent cleavage of peptide bonds with broad specificity.. With respect to regulation, allosterically activated by HslU binding. Protease subunit of a proteasome-like degradation complex believed to be a general protein degrading machinery. The chain is ATP-dependent protease subunit HslV from Coxiella burnetii (strain Dugway 5J108-111).